We begin with the raw amino-acid sequence, 90 residues long: Putative septation protein SpoVG (90 aa).

The protein belongs to the SpoVG family.

In terms of biological role, could be involved in septation. This is Putative septation protein SpoVG from Clostridium perfringens (strain SM101 / Type A).